The following is a 920-amino-acid chain: Plasma membrane ATPase (920 aa).

The span at 1 to 11 shows a compositional bias: basic and acidic residues; the sequence is MSDERITEKPP. Positions 1-71 are disordered; it reads MSDERITEKP…AEEDDGPAAA (71 aa). Residues 1–117 lie on the Cytoplasmic side of the membrane; the sequence is MSDERITEKP…REESENLLVK (117 aa). A compositionally biased stretch (acidic residues) spans 17–50; that stretch reads SEGEPVPEEEVEEETEEEVPDEQSSEDDDIDGLI. Residues 118–138 form a helical membrane-spanning segment; the sequence is FLMFFIGPIQFVMEAAAVLAA. The Extracellular portion of the chain corresponds to 139 to 142; it reads GLED. The helical transmembrane segment at 143 to 162 threads the bilayer; the sequence is WVDFGVICGLLFLNAGVGFI. Topologically, residues 163–293 are cytoplasmic; sequence QEFQAGSIVE…GQGHFTEVLN (131 aa). The chain crosses the membrane as a helical span at residues 294 to 315; that stretch reads GIGVILLVLVVITLLLIWTACF. Residues 316–326 are Extracellular-facing; that stretch reads YRTVRIVPILR. Residues 327–349 form a helical membrane-spanning segment; it reads YTLGITIVGVPVGLPAVVTTTMA. Residues 350 to 721 are Cytoplasmic-facing; that stretch reads GGAAYLAKKQ…IAILNHSLDI (372 aa). Asp380 functions as the 4-aspartylphosphate intermediate in the catalytic mechanism. Residues Asp636 and Asp640 each coordinate Mg(2+). A helical membrane pass occupies residues 722 to 740; the sequence is DLIVFIAIFADVATLAIAY. At 741-756 the chain is on the extracellular side; it reads DNAPFSPSPVKWNLPR. A helical transmembrane segment spans residues 757–776; that stretch reads LWGMSIMMGIILAAGTWITL. The Cytoplasmic segment spans residues 777-826; it reads TTMFLPKGGIIQNFGSIDGILFLEISLTENWLIFITRAVGPFWSSIPSWQ. The helical transmembrane segment at 827 to 847 threads the bilayer; the sequence is LAGAVFVVDVVATMFTLFGWW. Residues 848–859 are Extracellular-facing; that stretch reads SQNWTDIVTVVR. Residues 860 to 876 traverse the membrane as a helical segment; the sequence is IYIWSIGIFCCLGGAYY. At 877 to 920 the chain is on the cytoplasmic side; that stretch reads LMSESETFDRLMNGKPLKENKSTRSVEDFLASMRRVSTQHEKGN.

Belongs to the cation transport ATPase (P-type) (TC 3.A.3) family. Type IIIA subfamily.

The protein localises to the cell membrane. The enzyme catalyses ATP + H2O + H(+)(in) = ADP + phosphate + 2 H(+)(out). In terms of biological role, the plasma membrane ATPase of plants and fungi is a hydrogen ion pump. The proton gradient it generates drives the active transport of nutrients by H(+)-symport. The resulting external acidification and/or internal alkinization may mediate growth responses. In Zygosaccharomyces rouxii, this protein is Plasma membrane ATPase.